Reading from the N-terminus, the 187-residue chain is Peptidyl-tRNA hydrolase (187 aa).

His14 contacts tRNA. His19 acts as the Proton acceptor in catalysis. The tRNA site is built by Tyr62, Asn64, and Asn110.

Belongs to the PTH family. Monomer.

It is found in the cytoplasm. It carries out the reaction an N-acyl-L-alpha-aminoacyl-tRNA + H2O = an N-acyl-L-amino acid + a tRNA + H(+). Functionally, hydrolyzes ribosome-free peptidyl-tRNAs (with 1 or more amino acids incorporated), which drop off the ribosome during protein synthesis, or as a result of ribosome stalling. In terms of biological role, catalyzes the release of premature peptidyl moieties from peptidyl-tRNA molecules trapped in stalled 50S ribosomal subunits, and thus maintains levels of free tRNAs and 50S ribosomes. The protein is Peptidyl-tRNA hydrolase of Chlorobaculum tepidum (strain ATCC 49652 / DSM 12025 / NBRC 103806 / TLS) (Chlorobium tepidum).